A 1011-amino-acid polypeptide reads, in one-letter code: Cell division cycle-associated protein 2 (1011 aa).

A compositionally biased stretch (polar residues) spans 1–22 (MDTCSQESEPLQTKESPINNAG). The tract at residues 1-26 (MDTCSQESEPLQTKESPINNAGKTPL) is disordered. S125, S130, S209, S293, and S310 each carry phosphoserine. The residue at position 313 (T313) is a Phosphothreonine. The PP1-binding domain maps to 380–440 (KRKRVTFGED…PEWLPQPNFD (61 aa)). 2 positions are modified to phosphoserine: S391 and S398. Disordered stretches follow at residues 395-438 (LDES…PQPN) and 522-544 (PCKE…KVLP). Residue T403 is modified to Phosphothreonine. The span at 418–431 (SSLSPPLLEQSPVP) shows a compositional bias: low complexity. S428 carries the post-translational modification Phosphoserine. A compositionally biased stretch (basic and acidic residues) spans 522 to 543 (PCKEKKTNRRKSQESKHADKVL). S583, S702, and S747 each carry phosphoserine. K753 participates in a covalent cross-link: Glycyl lysine isopeptide (Lys-Gly) (interchain with G-Cter in SUMO2). Positions 790–803 (DQRKVSKSQGEDLG) are enriched in basic and acidic residues. Disordered stretches follow at residues 790–835 (DQRK…GLHL) and 896–1011 (GLVW…LSEN). Positions 931–945 (SSRQDPCTLPSTSSE) are enriched in polar residues. S967 carries the post-translational modification Phosphoserine. Residues 968-983 (FCTSTLANPKSTTQSR) show a composition bias toward polar residues. A compositionally biased stretch (basic and acidic residues) spans 993–1011 (QKRENTLQETSRESDLSEN).

Interacts with PPP1CC. Phosphorylated by CDK1. May regulate its subcellular location.

The protein resides in the nucleus. In terms of biological role, regulator of chromosome structure during mitosis required for condensin-depleted chromosomes to retain their compact architecture through anaphase. Acts by mediating the recruitment of phopsphatase PP1-gamma subunit (PPP1CC) to chromatin at anaphase and into the following interphase. At anaphase onset, its association with chromatin targets a pool of PPP1CC to dephosphorylate substrates. The polypeptide is Cell division cycle-associated protein 2 (CDCA2) (Bos taurus (Bovine)).